The chain runs to 270 residues: Protoheme IX farnesyltransferase (270 aa).

Helical transmembrane passes span 13–30 (LALL…LVPD), 33–53 (HATL…GSAL), 95–115 (LLVL…ALAW), 129–149 (LALA…WTLA), 156–176 (YRII…FWLF), 207–227 (LWLG…LMAP), and 249–269 (EATL…ALLL).

The protein belongs to the UbiA prenyltransferase family. Protoheme IX farnesyltransferase subfamily.

Its subcellular location is the cell inner membrane. It carries out the reaction heme b + (2E,6E)-farnesyl diphosphate + H2O = Fe(II)-heme o + diphosphate. The protein operates within porphyrin-containing compound metabolism; heme O biosynthesis; heme O from protoheme: step 1/1. In terms of biological role, converts heme B (protoheme IX) to heme O by substitution of the vinyl group on carbon 2 of heme B porphyrin ring with a hydroxyethyl farnesyl side group. This chain is Protoheme IX farnesyltransferase, found in Geobacter sulfurreducens (strain ATCC 51573 / DSM 12127 / PCA).